The sequence spans 543 residues: Chaperonin GroEL (543 aa).

Residues 31–34 (TMGP), 88–92 (DGTTT), Gly415, 479–481 (DAL), and Asp495 each bind ATP.

This sequence belongs to the chaperonin (HSP60) family. Forms a cylinder of 14 subunits composed of two heptameric rings stacked back-to-back. Interacts with the co-chaperonin GroES.

The protein localises to the cytoplasm. It catalyses the reaction ATP + H2O + a folded polypeptide = ADP + phosphate + an unfolded polypeptide.. Its function is as follows. Together with its co-chaperonin GroES, plays an essential role in assisting protein folding. The GroEL-GroES system forms a nano-cage that allows encapsulation of the non-native substrate proteins and provides a physical environment optimized to promote and accelerate protein folding. This chain is Chaperonin GroEL, found in Clostridium tetani (strain Massachusetts / E88).